We begin with the raw amino-acid sequence, 89 residues long: Three-finger toxin 3 (89 aa).

The N-terminal stretch at 1-16 is a signal peptide; it reads MKTLLLILGVVAFVYL. 4 disulfide bridges follow: Cys-24-Cys-47, Cys-40-Cys-66, Cys-70-Cys-81, and Cys-82-Cys-87.

Belongs to the three-finger toxin family. Ancestral subfamily. As to expression, expressed by the venom gland.

Its subcellular location is the secreted. The polypeptide is Three-finger toxin 3 (Sistrurus catenatus edwardsii (Desert massasauga)).